A 1162-amino-acid chain; its full sequence is Carbamoyl phosphate synthase large chain (1162 aa).

Residues 1–456 (MPKRTDIKSI…SLQKALRGLE (456 aa)) are carboxyphosphate synthetic domain. 12 residues coordinate ATP: Arg129, Arg222, Gly228, Gly229, Glu261, Val263, Glu268, Gly294, Val295, His296, Gln338, and Glu352. In terms of domain architecture, ATP-grasp 1 spans 186 to 381 (ETEWQLGEVE…IAKVAAKLAV (196 aa)). Gln338, Glu352, and Asn354 together coordinate Mg(2+). Gln338, Glu352, and Asn354 together coordinate Mn(2+). Residues 457–613 (TGLTGFDEIA…PFVGQPRSEA (157 aa)) are oligomerization domain. The tract at residues 614–1025 (EVSDRKKVVI…AFAKAQLGAG (412 aa)) is carbamoyl phosphate synthetic domain. In terms of domain architecture, ATP-grasp 2 spans 742–954 (QKLLIKLDLN…IAKVAARIMA (213 aa)). Arg778, Thr838, Leu840, Glu845, Gly870, Ile871, His872, Ser873, Gln913, and Glu925 together coordinate ATP. Mg(2+) is bound by residues Gln913, Glu925, and Asn927. Gln913, Glu925, and Asn927 together coordinate Mn(2+). The MGS-like domain maps to 1026-1162 (VELPREGTVF…VRPLQDYFRS (137 aa)). Positions 1026-1162 (VELPREGTVF…VRPLQDYFRS (137 aa)) are allosteric domain.

The protein belongs to the CarB family. As to quaternary structure, composed of two chains; the small (or glutamine) chain promotes the hydrolysis of glutamine to ammonia, which is used by the large (or ammonia) chain to synthesize carbamoyl phosphate. Tetramer of heterodimers (alpha,beta)4. Requires Mg(2+) as cofactor. It depends on Mn(2+) as a cofactor.

It carries out the reaction hydrogencarbonate + L-glutamine + 2 ATP + H2O = carbamoyl phosphate + L-glutamate + 2 ADP + phosphate + 2 H(+). It catalyses the reaction hydrogencarbonate + NH4(+) + 2 ATP = carbamoyl phosphate + 2 ADP + phosphate + 2 H(+). It participates in amino-acid biosynthesis; L-arginine biosynthesis; carbamoyl phosphate from bicarbonate: step 1/1. The protein operates within pyrimidine metabolism; UMP biosynthesis via de novo pathway; (S)-dihydroorotate from bicarbonate: step 1/3. In terms of biological role, large subunit of the glutamine-dependent carbamoyl phosphate synthetase (CPSase). CPSase catalyzes the formation of carbamoyl phosphate from the ammonia moiety of glutamine, carbonate, and phosphate donated by ATP, constituting the first step of 2 biosynthetic pathways, one leading to arginine and/or urea and the other to pyrimidine nucleotides. The large subunit (synthetase) binds the substrates ammonia (free or transferred from glutamine from the small subunit), hydrogencarbonate and ATP and carries out an ATP-coupled ligase reaction, activating hydrogencarbonate by forming carboxy phosphate which reacts with ammonia to form carbamoyl phosphate. The chain is Carbamoyl phosphate synthase large chain from Brucella melitensis biotype 1 (strain ATCC 23456 / CCUG 17765 / NCTC 10094 / 16M).